The following is a 156-amino-acid chain: MSRRRAAEKREVLPDAKFGDLVLAKFINSVMLQGKKAVAEKIVYGAFERIQSKTGQDPVKVFHDALDNVKPSVEVRSRRVGGATYQVPVEVRPDRRQALGLRWLIDFARKRSETTMVDRLTGEFLDAASNRGGAVKKREDTHRMADANKAFSHYRW.

Belongs to the universal ribosomal protein uS7 family. As to quaternary structure, part of the 30S ribosomal subunit. Contacts proteins S9 and S11.

In terms of biological role, one of the primary rRNA binding proteins, it binds directly to 16S rRNA where it nucleates assembly of the head domain of the 30S subunit. Is located at the subunit interface close to the decoding center, probably blocks exit of the E-site tRNA. The sequence is that of Small ribosomal subunit protein uS7 from Rhodospirillum rubrum (strain ATCC 11170 / ATH 1.1.1 / DSM 467 / LMG 4362 / NCIMB 8255 / S1).